Here is a 179-residue protein sequence, read N- to C-terminus: GTP-dependent dephospho-CoA kinase (179 aa).

GTP is bound by residues Asp-49, Val-50, Val-51, Asp-68, Lys-70, and Glu-126.

The protein belongs to the GTP-dependent DPCK family.

The enzyme catalyses 3'-dephospho-CoA + GTP = GDP + CoA + H(+). It participates in cofactor biosynthesis; coenzyme A biosynthesis. Functionally, catalyzes the GTP-dependent phosphorylation of the 3'-hydroxyl group of dephosphocoenzyme A to form coenzyme A (CoA). This Pyrococcus abyssi (strain GE5 / Orsay) protein is GTP-dependent dephospho-CoA kinase.